A 411-amino-acid chain; its full sequence is Short chain dehydrogenase ausT (411 aa).

NADP(+) contacts are provided by aspartate 105, glutamine 137, tyrosine 249, and arginine 253. The active-site Proton donor is the tyrosine 249. The Proton donor role is filled by tyrosine 263.

Belongs to the short-chain dehydrogenases/reductases (SDR) family.

It participates in secondary metabolite biosynthesis; terpenoid biosynthesis. Its function is as follows. Short chain dehydrogenase; part of the gene cluster that mediates the biosynthesis of calidodehydroaustin, a fungal meroterpenoid. The first step of the pathway is the synthesis of 3,5-dimethylorsellinic acid by the polyketide synthase ausA. 3,5-dimethylorsellinic acid is then prenylated by the polyprenyl transferase ausN. Further epoxidation by the FAD-dependent monooxygenase ausM and cyclization by the probable terpene cyclase ausL lead to the formation of protoaustinoid A. Protoaustinoid A is then oxidized to spiro-lactone preaustinoid A3 by the combined action of the FAD-binding monooxygenases ausB and ausC, and the dioxygenase ausE. Acid-catalyzed keto-rearrangement and ring contraction of the tetraketide portion of preaustinoid A3 by ausJ lead to the formation of preaustinoid A4. The aldo-keto reductase ausK, with the help of ausH, is involved in the next step by transforming preaustinoid A4 into isoaustinone which is in turn hydroxylated by the P450 monooxygenase ausI to form austinolide. The cytochrome P450 monooxygenase ausG modifies austinolide to austinol. Austinol is further acetylated to austin by the O-acetyltransferase ausP, which spontaneously changes to dehydroaustin. The cytochrome P450 monooxygenase ausR then converts dehydroaustin is into 7-dehydrodehydroaustin. The hydroxylation catalyzed by ausR permits the O-acetyltransferase ausQ to add an additional acetyl group to the molecule, leading to the formation of acetoxydehydroaustin. The short chain dehydrogenase ausT catalyzes the reduction of the double bond present between carbon atoms 1 and 2 to convert 7-dehydrodehydroaustin into 1,2-dihydro-7-hydroxydehydroaustin. AusQ catalyzes not only an acetylation reaction but also the addition of the PKS ausV diketide product to 1,2-dihydro-7-hydroxydehydroaustin, forming precalidodehydroaustin. Finally, the iron/alpha-ketoglutarate-dependent dioxygenase converts precalidodehydroaustin into calidodehydroaustin. The sequence is that of Short chain dehydrogenase ausT from Aspergillus calidoustus.